The chain runs to 578 residues: Trehalase (578 aa).

The signal sequence occupies residues Met-1–Gly-19. N-linked (GlcNAc...) asparagine glycosylation is present at Asn-78. Substrate-binding positions include Arg-168, Trp-175–Asp-176, Asn-212, and Arg-221–Gln-223. The N-linked (GlcNAc...) asparagine glycan is linked to Asn-261. Substrate-binding positions include Arg-286–Glu-288 and Gly-319. Catalysis depends on Asp-321, which acts as the Proton donor/acceptor. Asn-369 carries an N-linked (GlcNAc...) asparagine glycan. The active-site Proton donor/acceptor is the Glu-514. Glu-528 serves as a coordination point for substrate. A lipid anchor (GPI-anchor amidated serine) is attached at Ser-555. The propeptide at Gly-556–Arg-578 is removed in mature form.

Belongs to the glycosyl hydrolase 37 family. Homodimer; disulfide-linked. As to expression, expressed in small intestine, kidney, and to a lesser extent in liver.

The protein resides in the cell membrane. It carries out the reaction alpha,alpha-trehalose + H2O = alpha-D-glucose + beta-D-glucose. Functionally, intestinal trehalase is probably involved in the hydrolysis of ingested trehalose. This is Trehalase (TREH) from Oryctolagus cuniculus (Rabbit).